A 1050-amino-acid chain; its full sequence is Self-sufficient cytochrome P450 monooxygenase CYP505E3 (1050 aa).

C406 is a binding site for heme. Polar residues predominate over residues 459–481 (RGQSATGLSQGSMSASGATSSVA). Residues 459-495 (RGQSATGLSQGSMSASGATSSVASPGPPAATGAQSNP) are disordered. The Flavodoxin-like domain occupies 501 to 641 (ISFFYGSNSG…DLELWEETNL (141 aa)). FMN contacts are provided by residues 507–511 (SNSGT) and 585–617 (VFGCGHHDWAKTFYRIPILIDDLMHKAGATRLT). The 229-residue stretch at 679–907 (RGLVEAKVTA…RPAKDAFHLP (229 aa)) folds into the FAD-binding FR-type domain.

The protein in the N-terminal section; belongs to the cytochrome P450 family. The cofactor is FAD. FMN is required as a cofactor. It depends on heme as a cofactor.

It carries out the reaction 2 oxidized [cytochrome P450] + NADPH = 2 reduced [cytochrome P450] + NADP(+) + H(+). It catalyses the reaction an organic molecule + reduced [NADPH--hemoprotein reductase] + O2 = an alcohol + oxidized [NADPH--hemoprotein reductase] + H2O + H(+). The enzyme catalyses decane + reduced [NADPH--hemoprotein reductase] + O2 = 3-decanol + oxidized [NADPH--hemoprotein reductase] + H2O + H(+). The catalysed reaction is dodecane + reduced [NADPH--hemoprotein reductase] + O2 = 5-dodecanol + oxidized [NADPH--hemoprotein reductase] + H2O + H(+). It carries out the reaction tetradecane + reduced [NADPH--hemoprotein reductase] + O2 = 7-tetradecanol + oxidized [NADPH--hemoprotein reductase] + H2O + H(+). It catalyses the reaction hexadecane + reduced [NADPH--hemoprotein reductase] + O2 = 9-hexadecanol + oxidized [NADPH--hemoprotein reductase] + H2O + H(+). The enzyme catalyses dodecanoate + reduced [NADPH--hemoprotein reductase] + O2 = 5-hydroxydodecanoate + oxidized [NADPH--hemoprotein reductase] + H2O + H(+). The catalysed reaction is tetradecanoate + reduced [NADPH--hemoprotein reductase] + O2 = 7-hydroxytetradecanoate + oxidized [NADPH--hemoprotein reductase] + H2O + H(+). It carries out the reaction hexadecanoate + reduced [NADPH--hemoprotein reductase] + O2 = 9-hydroxyhexadecanoate + oxidized [NADPH--hemoprotein reductase] + H2O + H(+). It catalyses the reaction decan-1-ol + reduced [NADPH--hemoprotein reductase] + O2 = 1,3-decanediol + oxidized [NADPH--hemoprotein reductase] + H2O + H(+). The enzyme catalyses decan-1-ol + reduced [NADPH--hemoprotein reductase] + O2 = 1,7-decanediol + oxidized [NADPH--hemoprotein reductase] + H2O + H(+). The catalysed reaction is dodecan-1-ol + reduced [NADPH--hemoprotein reductase] + O2 = 1,5-dodecanediol + oxidized [NADPH--hemoprotein reductase] + H2O + H(+). It carries out the reaction dodecan-1-ol + reduced [NADPH--hemoprotein reductase] + O2 = 1,4-dodecanediol + oxidized [NADPH--hemoprotein reductase] + H2O + H(+). It catalyses the reaction dodecan-1-ol + reduced [NADPH--hemoprotein reductase] + O2 = 1,6-dodecanediol + oxidized [NADPH--hemoprotein reductase] + H2O + H(+). Functionally, self-sufficient cytochrome P450 monooxygenase that catalyzes the regioselective in-chain hydroxylation of alkanes, fatty alcohols, and fatty acids at the omega-7 position. Performs hydroxylation of C10-C16 n-alkanes and C12 and C14 fatty alcohols; and thereby enables the one step biocatalytic synthesis of rare alcohols such as 5-dodecanol and 7-tetradecanol. Converts 1-dodecanol into 1,5-dodecanediol as major product with very little sub-terminally hydroxylated products with the 1,4-dodecanediol and 1,6-dodecanediol more abundant. Does not use hexadecanediol nor decanoic acid as substrates. Converts dodecanoic acid to 5-hydroxydodecanoic acid which can be further converted into delta-dodecalactone by lactonization of the 5-hydroxy acid at low pH. Also gives sub-terminal hydroxylation of dodecanoic acid with 9-hydroxydodecanoic acid being the second most abundant product. The C14 and C16 fatty acids are double hydroxylated to yield dihydroxy acids hydroxylated at both the omega-7 position and a sub-terminal position (omega-1, omega-2, or omega-3). This is Self-sufficient cytochrome P450 monooxygenase CYP505E3 from Aspergillus terreus (strain NIH 2624 / FGSC A1156).